A 280-amino-acid polypeptide reads, in one-letter code: 2-dehydro-3-deoxyphosphooctonate aldolase (280 aa).

Belongs to the KdsA family.

It localises to the cytoplasm. The enzyme catalyses D-arabinose 5-phosphate + phosphoenolpyruvate + H2O = 3-deoxy-alpha-D-manno-2-octulosonate-8-phosphate + phosphate. The protein operates within carbohydrate biosynthesis; 3-deoxy-D-manno-octulosonate biosynthesis; 3-deoxy-D-manno-octulosonate from D-ribulose 5-phosphate: step 2/3. It functions in the pathway bacterial outer membrane biogenesis; lipopolysaccharide biosynthesis. In Pseudomonas putida (strain W619), this protein is 2-dehydro-3-deoxyphosphooctonate aldolase.